We begin with the raw amino-acid sequence, 70 residues long: Small ribosomal subunit protein bS21 (70 aa).

Belongs to the bacterial ribosomal protein bS21 family.

The chain is Small ribosomal subunit protein bS21 from Nitrosomonas eutropha (strain DSM 101675 / C91 / Nm57).